Here is a 413-residue protein sequence, read N- to C-terminus: Ferredoxin--NADP reductase (413 aa).

Methionine 1 carries the post-translational modification N-acetylmethionine. Positions 18–76 (NRLFVYEVIGLSQSTMTDGLDYPIRRSGSTFITVPLKRMNQEMRRITRMGGKIVSIKPL) constitute a CpcD-like domain. The segment at 74-120 (KPLEGDSPLPHTEGIAKPSQSEGSGSEAVANPAPESNKTMTTTPKEK) is disordered. A compositionally biased stretch (polar residues) spans 107-116 (PESNKTMTTT). The FAD-binding FR-type domain occupies 133 to 256 (KTPYIGKVLE…TGPVGKEMLL (124 aa)). Residues 192 to 195 (RLYS), 213 to 215 (CVR), tyrosine 219, 230 to 232 (VCS), and threonine 271 each bind FAD. Positions 195 and 215 each coordinate NADP(+). NADP(+)-binding positions include threonine 271, 303 to 304 (IP), 333 to 334 (SR), 343 to 347 (RMYIQ), 372 to 373 (GL), and glutamate 411.

It belongs to the ferredoxin--NADP reductase type 1 family. As to quaternary structure, purifies with both the classic phycobilisome (PBS) supercomplex (CpcG-PBS) and a photosystem I-associated PBS called CpcL-PBS; it accumulates to a higher level in CpcL-PBS. In both PBS it can be cross-linked to both phycocyanin subunits. Requires FAD as cofactor. In terms of processing, acetylated at the N-terminus; 6% of protein in CpcG-PBS and 12% of protein in CpcL-PBS is acetylated.

The protein resides in the cellular thylakoid membrane. The enzyme catalyses 2 reduced [2Fe-2S]-[ferredoxin] + NADP(+) + H(+) = 2 oxidized [2Fe-2S]-[ferredoxin] + NADPH. The sequence is that of Ferredoxin--NADP reductase from Synechocystis sp. (strain ATCC 27184 / PCC 6803 / Kazusa).